Reading from the N-terminus, the 431-residue chain is MDFSRQSFHRSLSSSSQGPALSMSGSLYRKGTVQRLGAAPSVYGGAGGHGTRISVSKAVMSYGGDLSNGSDLFGGNGKLAMQNLNDRLANYLEKVRSLEQSNSRLEAQIKQWYETNAPSTIRDYSSYYAQIKELQNQVKDAQVQNAQCVLRIDNAKLAAEDFRLKFETERGMRIAVEADLQGLSKVYDNLTLQKTDLEIQIEELNKDLALLKKEHQEEVEVLRRQLGNNVNVEVDAAPGLNLGEIMNEMRQRYEVLAQKNLQEAKEQFERQSQTLQQQVTVNTEELKGFEVQVTELRRTYQNLEIELQSHLSMKESLERNLEDVKARYASQLAAIQEMLSSLEAQLMQIRSDTERQNQEHNILLDIKTRLEQEIATYRRLLEGEDIKTTEYQLSTLEMKDIKKTRKIKTVVEEVVDGKVVSSEVKEIEESV.

The interval 1 to 23 (MDFSRQSFHRSLSSSSQGPALSM) is disordered. The segment at 1–76 (MDFSRQSFHR…SNGSDLFGGN (76 aa)) is head. Serine 13 carries the phosphoserine; by MAPKAPK2, MAPKAPK3 and PKC modification. Serine 16 and serine 26 each carry phosphoserine. The tract at residues 77 to 112 (GKLAMQNLNDRLANYLEKVRSLEQSNSRLEAQIKQW) is coil 1A. Residues 77 to 388 (GKLAMQNLND…RLLEGEDIKT (312 aa)) form the IF rod domain. The segment at 113-130 (YETNAPSTIRDYSSYYAQ) is linker 1. Positions 131–222 (IKELQNQVKD…KEHQEEVEVL (92 aa)) are coil 1B. Residues 223-245 (RRQLGNNVNVEVDAAPGLNLGEI) are linker 12. The tract at residues 246–384 (MNEMRQRYEV…ATYRRLLEGE (139 aa)) is coil 2. Positions 385-431 (DIKTTEYQLSTLEMKDIKKTRKIKTVVEEVVDGKVVSSEVKEIEESV) are tail.

Belongs to the intermediate filament family. Heterotetramer of two type I and two type II keratins. Associates with KRT8. Post-translationally, hyperphosphorylation at Ser-13 occurs during the early stages of apoptosis but becomes less prominent during the later stages. Phosphorylation at Ser-13 also increases in response to stress brought on by cell injury. Proteolytically cleaved by caspases during apoptosis. Cleavage occurs at Asp-235. Expressed at low levels in the more differentiated suprabasal regions of the small intestine, and at higher levels in the colon, mainly in the upper region and in scattered cells throughout the remaining epithelium. Also expressed in epithelial cells of bladder, ileum and stomach and at lower levels in pancreas and earskin. The phosphorylated form is nearly exclusively expressed in goblet cells of the small intestine and in the lumen-proximal cells of the colon (at protein level). Also expressed in jejunum and duodenum.

Functionally, plays a significant role in maintaining keratin filament organization in intestinal epithelia. When phosphorylated, plays a role in the secretion of mucin in the small intestine. The sequence is that of Keratin, type I cytoskeletal 20 from Mus musculus (Mouse).